Reading from the N-terminus, the 221-residue chain is Prolactin-3B1 (221 aa).

The first 30 residues, 1–30 (MQLPLTPLSFSGTLLLMAMSNFLLWEHVTS), serve as a signal peptide directing secretion. 2 disulfides stabilise this stretch: C81/C196 and C213/C221.

The protein belongs to the somatotropin/prolactin family.

Its subcellular location is the secreted. The protein is Prolactin-3B1 (PRL3B1) of Mesocricetus auratus (Golden hamster).